The chain runs to 193 residues: dCTP deaminase (193 aa).

Residues 110–115 (RSSLAR), D128, 136–138 (VLE), Y171, K178, and Q182 each bind dCTP. The Proton donor/acceptor role is filled by E138.

The protein belongs to the dCTP deaminase family. Homotrimer.

The catalysed reaction is dCTP + H2O + H(+) = dUTP + NH4(+). Its pathway is pyrimidine metabolism; dUMP biosynthesis; dUMP from dCTP (dUTP route): step 1/2. Functionally, catalyzes the deamination of dCTP to dUTP. The protein is dCTP deaminase of Escherichia coli (strain K12 / MC4100 / BW2952).